The following is a 130-amino-acid chain: C-type natriuretic peptide 2 (130 aa).

An N-terminal signal peptide occupies residues 1-22; sequence MAASSSSFVPLVLLFLAIPVEP. Residues 23-103 constitute a propeptide that is removed on maturation; it reads RPSMTRDEAQ…LQQQSKTTRR (81 aa). The interval 57–77 is disordered; sequence ELLPRRPGPPRSFGASPGALR. Cysteines 114 and 130 form a disulfide.

This sequence belongs to the natriuretic peptide family.

The protein resides in the secreted. Its function is as follows. Exhibits natriuretic and vasodepressant activity. Has cGMP-stimulating activity. May help to regulate body fluid homeostasis in a variety of aquatic environments. This is C-type natriuretic peptide 2 from Takifugu rubripes (Japanese pufferfish).